The chain runs to 704 residues: Phosphoribosylformylglycinamidine synthase subunit PurL (704 aa).

H32 is an active-site residue. An ATP-binding site is contributed by Y35. E76 provides a ligand contact to Mg(2+). Substrate-binding positions include 77-80 (SHNH) and R99. The active-site Proton acceptor is H78. D100 is a Mg(2+) binding site. Q224 is a binding site for substrate. D252 is a binding site for Mg(2+). A substrate-binding site is contributed by 296–298 (ESQ). ATP contacts are provided by D471 and G508. Residue N509 coordinates Mg(2+). Residue S511 participates in substrate binding.

This sequence belongs to the FGAMS family. As to quaternary structure, monomer. Part of the FGAM synthase complex composed of 1 PurL, 1 PurQ and 2 PurS subunits.

Its subcellular location is the cytoplasm. It carries out the reaction N(2)-formyl-N(1)-(5-phospho-beta-D-ribosyl)glycinamide + L-glutamine + ATP + H2O = 2-formamido-N(1)-(5-O-phospho-beta-D-ribosyl)acetamidine + L-glutamate + ADP + phosphate + H(+). Its pathway is purine metabolism; IMP biosynthesis via de novo pathway; 5-amino-1-(5-phospho-D-ribosyl)imidazole from N(2)-formyl-N(1)-(5-phospho-D-ribosyl)glycinamide: step 1/2. Part of the phosphoribosylformylglycinamidine synthase complex involved in the purines biosynthetic pathway. Catalyzes the ATP-dependent conversion of formylglycinamide ribonucleotide (FGAR) and glutamine to yield formylglycinamidine ribonucleotide (FGAM) and glutamate. The FGAM synthase complex is composed of three subunits. PurQ produces an ammonia molecule by converting glutamine to glutamate. PurL transfers the ammonia molecule to FGAR to form FGAM in an ATP-dependent manner. PurS interacts with PurQ and PurL and is thought to assist in the transfer of the ammonia molecule from PurQ to PurL. This Pyrococcus furiosus (strain ATCC 43587 / DSM 3638 / JCM 8422 / Vc1) protein is Phosphoribosylformylglycinamidine synthase subunit PurL.